The primary structure comprises 246 residues: Large ribosomal subunit protein uL3 (246 aa).

Disordered stretches follow at residues 140-162 (SHRSIGSTGGRQDPGKTFKNKKM) and 215-246 (DVPLPGKFRENGSAGASQVEAAPEAPASEENA). An N5-methylglutamine modification is found at Gln151. Positions 234–246 (EAAPEAPASEENA) are enriched in low complexity.

The protein belongs to the universal ribosomal protein uL3 family. In terms of assembly, part of the 50S ribosomal subunit. Forms a cluster with proteins L14 and L19. Post-translationally, methylated by PrmB.

Its function is as follows. One of the primary rRNA binding proteins, it binds directly near the 3'-end of the 23S rRNA, where it nucleates assembly of the 50S subunit. The chain is Large ribosomal subunit protein uL3 from Methylorubrum extorquens (strain PA1) (Methylobacterium extorquens).